Reading from the N-terminus, the 270-residue chain is Glutamate racemase (270 aa).

Residues 7–8 and 39–40 contribute to the substrate site; these read DS and YG. Residue Cys-70 is the Proton donor/acceptor of the active site. 71–72 provides a ligand contact to substrate; the sequence is NT. Cys-194 acts as the Proton donor/acceptor in catalysis. 195–196 contributes to the substrate binding site; the sequence is TH.

Belongs to the aspartate/glutamate racemases family.

The catalysed reaction is L-glutamate = D-glutamate. The protein operates within cell wall biogenesis; peptidoglycan biosynthesis. Its function is as follows. Provides the (R)-glutamate required for cell wall biosynthesis. In Cereibacter sphaeroides (strain ATCC 17025 / ATH 2.4.3) (Rhodobacter sphaeroides), this protein is Glutamate racemase.